A 352-amino-acid polypeptide reads, in one-letter code: UDP-3-O-acylglucosamine N-acyltransferase (352 aa).

H246 functions as the Proton acceptor in the catalytic mechanism.

The protein belongs to the transferase hexapeptide repeat family. LpxD subfamily. Homotrimer.

It carries out the reaction a UDP-3-O-[(3R)-3-hydroxyacyl]-alpha-D-glucosamine + a (3R)-hydroxyacyl-[ACP] = a UDP-2-N,3-O-bis[(3R)-3-hydroxyacyl]-alpha-D-glucosamine + holo-[ACP] + H(+). The protein operates within bacterial outer membrane biogenesis; LPS lipid A biosynthesis. Catalyzes the N-acylation of UDP-3-O-acylglucosamine using 3-hydroxyacyl-ACP as the acyl donor. Is involved in the biosynthesis of lipid A, a phosphorylated glycolipid that anchors the lipopolysaccharide to the outer membrane of the cell. This chain is UDP-3-O-acylglucosamine N-acyltransferase, found in Chlorobium luteolum (strain DSM 273 / BCRC 81028 / 2530) (Pelodictyon luteolum).